Reading from the N-terminus, the 204-residue chain is MKDKVSFPFSPDRPLCVPKLFTISAPAGAGKTTLVRMLAEEFPDSFQKTVSLTTRSPRPEEVHGVDYYFVSQEEFLKRLDSGDFLEWVALFGEYYGTSRLEIDKIWKSGKHAIAVIDVEGALALRSKIPTVTIFISAPSLEELERRLKHRGSEQDAQRQERLQHSLIEQAASSKFEYVIINDDLEKSYEILKSIFIAEEHRNVL.

Residues 18-196 (PKLFTISAPA…SYEILKSIFI (179 aa)) enclose the Guanylate kinase-like domain. 25–32 (APAGAGKT) serves as a coordination point for ATP.

It belongs to the guanylate kinase family.

It is found in the cytoplasm. The enzyme catalyses GMP + ATP = GDP + ADP. Functionally, essential for recycling GMP and indirectly, cGMP. The protein is Guanylate kinase of Chlamydia felis (strain Fe/C-56) (Chlamydophila felis).